A 547-amino-acid chain; its full sequence is Nuclear speckle splicing regulatory protein 1 (547 aa).

A disordered region spans residues 25–51; that stretch reads KPSVFGNDSDDDEASVSESLQREAAKK. A phosphoserine mark is found at Ser27 and Ser33. Residues 103–177 are a coiled coil; that stretch reads IHNLLKAVEI…EARLDVTKQK (75 aa). Residues 105–169 form a necessary for alternative splicing activity region; the sequence is NLLKAVEIRK…REKRAAALEA (65 aa). A disordered region spans residues 188-523; sequence NQAVGEEAVP…KRSNEETVMS (336 aa). Residues Lys198 and Lys209 each participate in a glycyl lysine isopeptide (Lys-Gly) (interchain with G-Cter in SUMO2) cross-link. A compositionally biased stretch (basic and acidic residues) spans 200 to 217; it reads SFREARTVIKEEKLRGYP. Residues 223–232 show a composition bias toward polar residues; sequence ENRPQQNCAL. Positions 237–254 are enriched in acidic residues; that stretch reads EEAEENPDADSDSEESCD. Ser247 and Ser252 each carry phosphoserine. Residues 255–269 show a composition bias toward basic and acidic residues; sequence DGERGDHKVKSRGEE. The residue at position 276 (Lys276) is an N6-acetyllysine. The segment covering 277-287 has biased composition (basic residues); sequence YLKHHKNHTHS. Residue Lys279 forms a Glycyl lysine isopeptide (Lys-Gly) (interchain with G-Cter in SUMO2) linkage. The span at 308 to 339 shows a compositional bias: basic and acidic residues; sequence RGHEHKGGQHQDRQSRDQESCHKDRSHREEKS. Basic residues predominate over residues 340–355; it reads SHRHREASHKDHHWKR. Composition is skewed to basic and acidic residues over residues 356–480 and 490–506; these read HEHE…KPPR and RLTE…ERPP. A coiled-coil region spans residues 376–417; it reads KREKYSSREQEKDRQWNDHDRYSEKEKKGKEKEEHRKARRER. Phosphoserine is present on Ser447.

This sequence belongs to the NSRP1 family. As to quaternary structure, interacts (via C-terminus) with SRSF1. Interacts (via C-terminus) with SRSF2.

Its subcellular location is the nucleus. The protein resides in the nucleus speckle. RNA-binding protein that mediates pre-mRNA alternative splicing regulation. The chain is Nuclear speckle splicing regulatory protein 1 (Nsrp1) from Rattus norvegicus (Rat).